The following is a 726-amino-acid chain: Catalase-peroxidase (726 aa).

Residues 1 to 33 (MSTSDDIHNTTATGKCPFHQGGHDQSAGAGTTT) are disordered. A cross-link (tryptophyl-tyrosyl-methioninium (Trp-Tyr) (with M-252)) is located at residues 105-226 (WHGAGTYRSI…LGATEMGLIY (122 aa)). The active-site Proton acceptor is the His106. Residues 226–252 (YVNPEGPDHSGEPLSAAAAIRATFGNM) constitute a cross-link (tryptophyl-tyrosyl-methioninium (Tyr-Met) (with W-105)). Residue His267 coordinates heme b.

The protein belongs to the peroxidase family. Peroxidase/catalase subfamily. In terms of assembly, homodimer or homotetramer. The cofactor is heme b. Post-translationally, formation of the three residue Trp-Tyr-Met cross-link is important for the catalase, but not the peroxidase activity of the enzyme.

The enzyme catalyses H2O2 + AH2 = A + 2 H2O. It carries out the reaction 2 H2O2 = O2 + 2 H2O. Functionally, bifunctional enzyme with both catalase and broad-spectrum peroxidase activity. This Shigella sonnei (strain Ss046) protein is Catalase-peroxidase.